Reading from the N-terminus, the 94-residue chain is Large ribosomal subunit protein bL27 (94 aa).

Residues 1-9 (MTLNNLQLF) constitute a propeptide that is removed on maturation. The interval 9–33 (FAHKKGGGSTSNGRDSQAKRLGAKA) is disordered.

This sequence belongs to the bacterial ribosomal protein bL27 family. In terms of processing, the N-terminus is cleaved by ribosomal processing cysteine protease Prp.

This Streptococcus pneumoniae serotype 4 (strain ATCC BAA-334 / TIGR4) protein is Large ribosomal subunit protein bL27.